The primary structure comprises 86 residues: Testis-expressed protein 54 (86 aa).

Positions 1–34 are enriched in basic and acidic residues; the sequence is MGCCQDKNRWASDEQARDEVTEDGREGNEVDNSG. 2 disordered regions span residues 1–43 and 57–86; these read MGCC…SNES and SRRESSRSGKQDNQMQERKHEGSHKEPEKG.

Expressed in Testis.

The sequence is that of Testis-expressed protein 54 from Mus musculus (Mouse).